The primary structure comprises 142 residues: Mitochondrial import inner membrane translocase subunit TIM22-4 (142 aa).

The next 4 helical transmembrane spans lie at 21-41 (VTSG…LGAL), 70-88 (SCKT…ECIV), 97-113 (TVNT…SMSA), and 120-137 (ACIG…IEKF).

It belongs to the Tim17/Tim22/Tim23 family.

It is found in the mitochondrion inner membrane. Essential core component of the TIM22 complex, a complex that mediates the import and insertion of multi-pass transmembrane proteins into the mitochondrial inner membrane. The sequence is that of Mitochondrial import inner membrane translocase subunit TIM22-4 (TIM22-4) from Arabidopsis thaliana (Mouse-ear cress).